We begin with the raw amino-acid sequence, 157 residues long: Ribosomal RNA large subunit methyltransferase H (157 aa).

S-adenosyl-L-methionine contacts are provided by residues Leu-73, Gly-105, and 124–129 (LSQMTF).

It belongs to the RNA methyltransferase RlmH family. Homodimer.

The protein resides in the cytoplasm. The catalysed reaction is pseudouridine(1915) in 23S rRNA + S-adenosyl-L-methionine = N(3)-methylpseudouridine(1915) in 23S rRNA + S-adenosyl-L-homocysteine + H(+). Specifically methylates the pseudouridine at position 1915 (m3Psi1915) in 23S rRNA. The chain is Ribosomal RNA large subunit methyltransferase H from Flavobacterium psychrophilum (strain ATCC 49511 / DSM 21280 / CIP 103535 / JIP02/86).